A 2467-amino-acid polypeptide reads, in one-letter code: Polyprotein P1234 (2467 aa).

The Alphavirus-like MT domain occupies 27-258; it reads ESQQVTPNDH…ESRKLLRSWH (232 aa). Positions 243-262 are nsP1 membrane-binding; it reads GSTLYTESRKLLRSWHLPSV. Residues C416 and C418 are each lipidated (S-palmitoyl cysteine; by host). The (+)RNA virus helicase ATP-binding domain occupies 689–841; sequence DLINPPFHEF…HNICTRVLHK (153 aa). 720–727 contributes to the a ribonucleoside 5'-triphosphate binding site; the sequence is GVPGSGKS. Positions 842 to 990 constitute a (+)RNA virus helicase C-terminal domain; it reads SISRRCTLPV…LEEWHEEHDG (149 aa). A Peptidase C9 domain is found at 1003–1325; the sequence is DPFQNKAKVC…QKLSSMYACN (323 aa). The nucleolus localization signal stretch occupies residues 1004 to 1023; sequence PFQNKAKVCWAKCLVQVLET. The active-site For cysteine protease nsP2 activity is the C1012. The Nuclear export signal motif lies at 1056 to 1065; sequence TRYYGVDLDS. Residue H1081 is the For cysteine protease nsP2 activity of the active site. The Nuclear localization signal motif lies at 1180–1184; that stretch reads PHKRV. Residues 1333 to 1492 enclose the Macro domain; the sequence is APSYRVRRAD…KIQEAIDRRT (160 aa). ADP-D-ribose contacts are provided by D1342, N1356, G1364, G1444, and F1446. C1594, C1596, C1619, and C1637 together coordinate Zn(2+). The tract at residues 1768-1803 is disordered; sequence KVATEPPLEPEAPIPAPRKRRTTSTSPPHNPEDFVP. A compositionally biased stretch (pro residues) spans 1774 to 1783; sequence PLEPEAPIPA. Short sequence motifs (FGDF; binding to host G3BP1) lie at residues 1820-1823 and 1841-1844; these read FGDL and FGDI. The 116-residue stretch at 2221–2336 folds into the RdRp catalytic domain; sequence DAVLETDIAS…HGVRSDPLMA (116 aa).

Interacts with non-structural protein 3. Interacts with RNA-directed RNA polymerase nsP4. Interacts with protease nsP2. interacts with itself. In terms of assembly, interacts with mRNA-capping enzyme nsP1. Interacts with host DDX1. Interacts with host DDX3. Interacts (via C-terminus) with host G3BP1; this interaction inhibits the formation of host stress granules on viral mRNAs and the nsp3-G3BP1 complexes bind viral RNAs and probably orchestrate the assembly of viral replication complexes. Interacts (via C-terminus) with host G3BP2; this interaction inhibits the formation of host stress granules on viral mRNAs and the nsp3-G3BP2 complexes bind viral RNAs and probably orchestrate the assembly of viral replication complexes. As to quaternary structure, interacts with mRNA-capping enzyme nsP1. Interacts with protease nsP2. interacts with itself. Interacts with RNA-directed RNA polymerase nsP4. Interacts with mRNA-capping enzyme nsP1. Interacts with KPNA1/karyopherin-alpha1; this interaction probably allows the active transport of protease nsP2 into the host nucleus. The cofactor is Mg(2+). Mn(2+) is required as a cofactor. In terms of processing, specific enzymatic cleavages in vivo yield mature proteins. The processing of the polyprotein is temporally regulated. In early stages (1.7 hpi), P1234 is first cleaved in trans through its nsP2 protease activity, releasing P123' and nsP4, which associate to form the early replication complex. At the same time, P1234 is also cut at the nsP1/nsP2 site early in infection but with lower efficiency. After replication of the viral minus-strand RNAs (4 hpi), the polyproteins are cut at the nsP1/nsP2 and nsP2/nsP3 sites very efficiently, preventing accumulation of P123' and P1234 and allowing the formation of the late replication complex. NsP3'/nsP4 site is not cleaved anymore and P34 is produced rather than nsP4. Post-translationally, specific enzymatic cleavages in vivo yield mature proteins. The processing of the polyprotein is temporally regulated. In early stages (1.7 hpi), P123 is cleaved at the nsP1/nsP2 site with low efficiency. After replication of the viral minus-strand RNAs (4 hpi), the polyproteins are cut at the nsP1/nsP2 and nsP2/nsP3 sites very efficiently, preventing accumulation of P123 and allowing the formation of the late replication complex. Palmitoylated by host palmitoyltransferases ZDHHC2 and ZDHHC19. In terms of processing, phosphorylated by host on serines and threonines. Post-translationally, ubiquitinated; targets the protein for rapid degradation via the ubiquitin system. Nsp4 is present in extremely low quantities due to low frequency of translation through the amber stop-codon and the degradation by the ubiquitin pathway.

Its subcellular location is the host cytoplasmic vesicle membrane. It localises to the host cell membrane. The protein localises to the host cell projection. It is found in the host filopodium. The protein resides in the host nucleus. Its subcellular location is the host cytoplasm. It carries out the reaction GTP + S-adenosyl-L-methionine = N(7)-methyl-GTP + S-adenosyl-L-homocysteine. The catalysed reaction is N(7)-methyl-GTP + L-histidyl-[protein] = N(tele)-(N(7)-methylguanosine 5'-phospho)-L-histidyl-[protein] + diphosphate. It catalyses the reaction N(tele)-(N(7)-methylguanosine 5'-phospho)-L-histidyl-[protein] + a 5'-end diphospho-(purine-ribonucleoside) in mRNA + H(+) = a 5'-end (N(7)-methyl 5'-triphosphoguanosine)-(purine-ribonucleoside) in mRNA + L-histidyl-[protein]. The enzyme catalyses a 5'-end triphospho-ribonucleoside in mRNA + H2O = a 5'-end diphospho-ribonucleoside in mRNA + phosphate + H(+). It carries out the reaction a ribonucleoside 5'-triphosphate + H2O = a ribonucleoside 5'-diphosphate + phosphate + H(+). The catalysed reaction is ATP + H2O = ADP + phosphate + H(+). It catalyses the reaction RNA(n) + a ribonucleoside 5'-triphosphate = RNA(n+1) + diphosphate. The enzyme catalyses RNA(n) + ATP = RNA(n)-3'-adenine ribonucleotide + diphosphate. It carries out the reaction 4-O-(ADP-D-ribosyl)-L-aspartyl-[protein] + H2O = L-aspartyl-[protein] + ADP-D-ribose + H(+). The catalysed reaction is 5-O-(ADP-D-ribosyl)-L-glutamyl-[protein] + H2O = L-glutamyl-[protein] + ADP-D-ribose + H(+). It catalyses the reaction ADP-alpha-D-ribose 1''-phosphate + H2O = ADP-D-ribose + phosphate. Inactive precursor of the viral replicase, which is activated by cleavages carried out by the viral protease nsP2. In terms of biological role, the early replication complex formed by the polyprotein P123 and nsP4 synthesizes minus-strand RNAs. As soon P123 is cleaved into mature proteins, the plus-strand RNAs synthesis begins. Its function is as follows. The early replication complex formed by the polyprotein P123' and nsP4 synthesizes minus-strand RNAs. Polyprotein P123' is a short-lived polyprotein that accumulates during early stage of infection. As soon P123' is cleaved into mature proteins, the plus-strand RNAs synthesis begins. Functionally, cytoplasmic capping enzyme that catalyzes two virus-specific reactions: methyltransferase and nsP1 guanylyltransferase. mRNA-capping is necessary since all viral RNAs are synthesized in the cytoplasm, and host capping enzymes are restricted to the nucleus. The enzymatic reaction involves a covalent link between 7-methyl-GMP and nsP1, whereas eukaryotic capping enzymes form a covalent complex only with GMP. nsP1 capping consists in the following reactions: GTP is first methylated into 7-methyl-GMP and then is covalently linked to nsP1 to form the m7GMp-nsP1 complex from which 7-methyl-GMP complex is transferred to the mRNA to create the cap structure. NsP1 is needed for the initiation of the minus-strand RNAs synthesis. Probably serves as a membrane anchor for the replication complex composed of nsP1-nsP4. Palmitoylated nsP1 is remodeling host cell cytoskeleton, and induces filopodium-like structure formation at the surface of the host cell. Multifunctional protein whose N-terminus is part of the RNA polymerase complex and displays NTPase, RNA triphosphatase and helicase activities. NTPase and RNA triphosphatase are involved in viral RNA capping and helicase keeps a check on the dsRNA replication intermediates. The C-terminus harbors a protease that specifically cleaves the polyproteins and releases the mature proteins. Required for the shutoff of minus-strand RNAs synthesis. Specifically inhibits the host IFN response by promoting the nuclear export of host STAT1. Also inhibits host transcription by inducing rapid proteasome-dependent degradation of POLR2A, a catalytic subunit of the RNAPII complex. The resulting inhibition of cellular protein synthesis serves to ensure maximal viral gene expression and to evade host immune response. In terms of biological role, seems to be essential for minus-strand RNAs and subgenomic 26S mRNAs synthesis. Displays mono-ADP-ribosylhydrolase activity. ADP-ribosylation is a post-translational modification that controls various processes of the host cell and the virus probably needs to revert it for optimal viral replication. Binds proteins of FXR family and sequesters them into the viral RNA replication complexes thereby inhibiting the formation of host stress granules on viral mRNAs. The nsp3'-FXR complexes bind viral RNAs and probably orchestrate the assembly of viral replication complexes, thanks to the ability of FXR family members to self-assemble and bind DNA. Its function is as follows. Seems to be essential for minus-strand RNAs and subgenomic 26S mRNAs synthesis. Displays mono-ADP-ribosylhydrolase activity. ADP-ribosylation is a post-translantional modification that controls various processes of the host cell and the virus probably needs to revert it for optimal viral replication. Binds proteins of G3BP family and sequesters them into the viral RNA replication complexes thereby inhibiting the formation of host stress granules on viral mRNAs. The nsp3-G3BP complexes bind viral RNAs and probably orchestrate the assembly of viral replication complexes, thanks to the ability of G3BP family members to self-assemble and bind DNA. Functionally, RNA dependent RNA polymerase. Replicates genomic and antigenomic RNA by recognizing replications specific signals. The early replication complex formed by the polyprotein P123 and nsP4 synthesizes minus-strand RNAs. The late replication complex composed of fully processed nsP1-nsP4 is responsible for the production of genomic and subgenomic plus-strand RNAs. The core catalytic domain of nsP4 also possesses terminal adenylyltransferase (TATase) activity that is probably involved in maintenance and repair of the poly(A) tail, an element required for replication of the viral genome. The sequence is that of Polyprotein P1234 from Getah virus (GETV).